The sequence spans 213 residues: EEF1A lysine methyltransferase 1 (213 aa).

Belongs to the class I-like SAM-binding methyltransferase superfamily. EFM5 family.

It is found in the cytoplasm. It catalyses the reaction L-lysyl-[protein] + 3 S-adenosyl-L-methionine = N(6),N(6),N(6)-trimethyl-L-lysyl-[protein] + 3 S-adenosyl-L-homocysteine + 3 H(+). Protein-lysine methyltransferase that selectively catalyzes the trimethylation of EEF1A at 'Lys-79'. The sequence is that of EEF1A lysine methyltransferase 1 from Gallus gallus (Chicken).